The sequence spans 323 residues: Putative gluconeogenesis factor (323 aa).

This sequence belongs to the gluconeogenesis factor family.

It is found in the cytoplasm. Functionally, required for morphogenesis under gluconeogenic growth conditions. The protein is Putative gluconeogenesis factor of Thermoanaerobacterium thermosulfurigenes (Clostridium thermosulfurogenes).